We begin with the raw amino-acid sequence, 484 residues long: Protein nucleotidyltransferase YdiU (484 aa).

Gly81, Gly83, Arg84, Lys103, Asp115, Gly116, Arg166, and Arg173 together coordinate ATP. The active-site Proton acceptor is the Asp244. Residues Asn245 and Asp254 each contribute to the Mg(2+) site. Asp254 is a binding site for ATP.

The protein belongs to the SELO family. Mg(2+) is required as a cofactor. The cofactor is Mn(2+).

It catalyses the reaction L-seryl-[protein] + ATP = 3-O-(5'-adenylyl)-L-seryl-[protein] + diphosphate. The catalysed reaction is L-threonyl-[protein] + ATP = 3-O-(5'-adenylyl)-L-threonyl-[protein] + diphosphate. It carries out the reaction L-tyrosyl-[protein] + ATP = O-(5'-adenylyl)-L-tyrosyl-[protein] + diphosphate. The enzyme catalyses L-histidyl-[protein] + UTP = N(tele)-(5'-uridylyl)-L-histidyl-[protein] + diphosphate. It catalyses the reaction L-seryl-[protein] + UTP = O-(5'-uridylyl)-L-seryl-[protein] + diphosphate. The catalysed reaction is L-tyrosyl-[protein] + UTP = O-(5'-uridylyl)-L-tyrosyl-[protein] + diphosphate. Functionally, nucleotidyltransferase involved in the post-translational modification of proteins. It can catalyze the addition of adenosine monophosphate (AMP) or uridine monophosphate (UMP) to a protein, resulting in modifications known as AMPylation and UMPylation. This Shewanella putrefaciens (strain CN-32 / ATCC BAA-453) protein is Protein nucleotidyltransferase YdiU.